A 298-amino-acid polypeptide reads, in one-letter code: Sulfate adenylyltransferase subunit 2 (298 aa).

Composition is skewed to basic and acidic residues over residues Arg272–Asp282 and Met289–Phe298. The interval Arg272–Phe298 is disordered.

The protein belongs to the PAPS reductase family. CysD subfamily. Heterodimer composed of CysD, the smaller subunit, and CysN.

It catalyses the reaction sulfate + ATP + H(+) = adenosine 5'-phosphosulfate + diphosphate. It participates in sulfur metabolism; hydrogen sulfide biosynthesis; sulfite from sulfate: step 1/3. Its function is as follows. With CysN forms the ATP sulfurylase (ATPS) that catalyzes the adenylation of sulfate producing adenosine 5'-phosphosulfate (APS) and diphosphate, the first enzymatic step in sulfur assimilation pathway. APS synthesis involves the formation of a high-energy phosphoric-sulfuric acid anhydride bond driven by GTP hydrolysis by CysN coupled to ATP hydrolysis by CysD. The chain is Sulfate adenylyltransferase subunit 2 from Burkholderia lata (strain ATCC 17760 / DSM 23089 / LMG 22485 / NCIMB 9086 / R18194 / 383).